The following is a 510-amino-acid chain: MKLKPIEVAEILQKEIANINCLSELEEVGQVITVGDGIAQIYGLANVKSGEVVEFKSGVKGLVLNLENDSVGAVIMGDDNQVQQGDNVKRTKEVLEVPVGKALLGRVVDALGNPIDGKGDIASKEYRHIEMKAPGIIERTSVSEPVQTGIKAIDSLIPIGRGQRELIIGDRQTGKTAIAVDTIINQKQAHSLTNESDKIYCIYVAIGQKRSSVAQIVKKLEDAGAMDYTLIVSATASEAAALQFIAPYSACSMGEYFRDNGMHALIIYDDLSKHAVAYRQISLLLRRPPGREAYPGDVFYLHSRLLERAAKMSEAKGSGSLTALPIIETQAGDVSAYIPTNVISITDGQIFLESELFYKGVRPAVNVGISVSRVGSAAQIKAMKQVAGSVKLELAQFRELESFSQFGSDLDPATKVQIDHGKRLVEILKQAQYHPFPVEEQIVSIYVGTKKYLNDVPLQQVKEFEDKMLTEIRLNKKDILESIKNEQCITEETEQKLKAFLENFVKEFVK.

Residue G169–T176 coordinates ATP.

The protein belongs to the ATPase alpha/beta chains family. F-type ATPases have 2 components, CF(1) - the catalytic core - and CF(0) - the membrane proton channel. CF(1) has five subunits: alpha(3), beta(3), gamma(1), delta(1), epsilon(1). CF(0) has three main subunits: a(1), b(2) and c(9-12). The alpha and beta chains form an alternating ring which encloses part of the gamma chain. CF(1) is attached to CF(0) by a central stalk formed by the gamma and epsilon chains, while a peripheral stalk is formed by the delta and b chains.

It is found in the cell inner membrane. The catalysed reaction is ATP + H2O + 4 H(+)(in) = ADP + phosphate + 5 H(+)(out). Its function is as follows. Produces ATP from ADP in the presence of a proton gradient across the membrane. The alpha chain is a regulatory subunit. This chain is ATP synthase subunit alpha, found in Rickettsia peacockii (strain Rustic).